Reading from the N-terminus, the 247-residue chain is uncharacterized protein (247 aa).

A run of 2 helical transmembrane segments spans residues 9-29 (IIAI…FLIF) and 37-57 (SYFL…SLII).

It is found in the cell membrane. This is an uncharacterized protein from Methanocaldococcus jannaschii (strain ATCC 43067 / DSM 2661 / JAL-1 / JCM 10045 / NBRC 100440) (Methanococcus jannaschii).